A 152-amino-acid chain; its full sequence is Deoxyuridine 5'-triphosphate nucleotidohydrolase (152 aa).

Residues 71 to 73, Asn-84, 88 to 90, and Met-98 contribute to the substrate site; these read RSG and LID.

This sequence belongs to the dUTPase family. Mg(2+) serves as cofactor.

It catalyses the reaction dUTP + H2O = dUMP + diphosphate + H(+). It functions in the pathway pyrimidine metabolism; dUMP biosynthesis; dUMP from dCTP (dUTP route): step 2/2. This enzyme is involved in nucleotide metabolism: it produces dUMP, the immediate precursor of thymidine nucleotides and it decreases the intracellular concentration of dUTP so that uracil cannot be incorporated into DNA. The protein is Deoxyuridine 5'-triphosphate nucleotidohydrolase of Aeromonas hydrophila subsp. hydrophila (strain ATCC 7966 / DSM 30187 / BCRC 13018 / CCUG 14551 / JCM 1027 / KCTC 2358 / NCIMB 9240 / NCTC 8049).